The chain runs to 744 residues: MSSGGRFNFDDGGSYCGGWEDGKAHGHGVCTGPKGQGEYTGSWSHGFEVLGVYTWPSGNTYQGTWAQGKRHGIGLESKGKWVYKGEWTHGFKGRYGVRECTGNGAKYEGTWSNGLQDGYGTETYSDGGTYQGQWVGGMRQGYGVRQSVPYGMAAVIRSPLRTSINSLRSEHTNGAALHPDASPAVAGSPAVSRGGFVLVAHSDSEILKSKKKGLFRRSLLSGLKLRKSESKSSLASQRSKQSSFRSEAGMSTVSSTASDIHSTISLGEAEAELAVIEDDIDATTTETYVGEWKNDKRSGFGVSQRSDGLKYEGEWVSNRRHGYGCMTFPDGTKEEGKYKQNVLVSGKRKNLIPLRASKIREKVDRAVEAAERAATIAKQKAEIAASRTSHSRAKAEAALTAAQKAQEEARIARITAKEFSPSFQHRENGLEYQRPKHQMSCDDIEVLSTGTPLQQESPELYRKGTTPSDLTPDDSPLQSFPASPTSTPPPAPASRTKMAHFSRQVSVDEERSGDIQMLLEGRGGDYARNSWGEEKAGASRGIRSGALRSGQPTEDFRTRGSGHKQPGNPKPRERRTESPTTFSWTSHHRAGNPCSGGPKLLEPDEEQLSNYKLEMKPLLRMDACPQDTHPQRRRHSRGAGGDRGFGLQRLRSKSQNKENLRPASSAEPTVQKLESLRLGDRPEPRLLRWDLTFSPPQKSLPVALESDEETGDELKSSTGSAPILVVMVILLNIGVAILFINFFI.

At 1 to 723 (MSSGGRFNFD…LKSSTGSAPI (723 aa)) the chain is on the cytoplasmic side. 6 MORN repeats span residues 15–37 (YCGG…KGQG), 39–60 (YTGS…SGNT), 61–82 (YQGT…GKWV), 83–105 (YKGE…GNGA), 107–129 (YEGT…DGGT), and 130–152 (YQGQ…PYGM). The interval 230–252 (SKSSLASQRSKQSSFRSEAGMST) is disordered. The span at 231 to 244 (KSSLASQRSKQSSF) shows a compositional bias: low complexity. 2 MORN repeats span residues 288-310 (YVGE…DGLK) and 311-333 (YEGE…DGTK). Residue S440 is modified to Phosphoserine. Position 451 is a phosphothreonine (T451). Disordered regions lie at residues 451-603 (TPLQ…LLEP) and 624-677 (CPQD…ESLR). Phosphoserine is present on S457. The residue at position 471 (T471) is a Phosphothreonine. 2 positions are modified to phosphoserine: S475 and S506. 2 positions are modified to phosphoserine: S699 and S706. The helical; Anchor for type IV membrane protein transmembrane segment at 724–744 (LVVMVILLNIGVAILFINFFI) threads the bilayer.

Belongs to the junctophilin family. As to expression, specifically expressed in brain. Highest levels in the olfactory tubercle, caudate putamen, nucleus accumbens, hippocampal formation, piriform cortex and cerebellar cortex. Expressed in disctete neurons sites. In hippocampal formation, expressed in dendrites of hippocampal pyramidal and denate granule cells. In cerebellum, it is highly expressed in Purkinge cells, while it is weakly expressed in granular cells.

It localises to the cell membrane. The protein localises to the endoplasmic reticulum membrane. Its function is as follows. Junctophilins contribute to the formation of junctional membrane complexes (JMCs) which link the plasma membrane with the endoplasmic or sarcoplasmic reticulum in excitable cells. Provides a structural foundation for functional cross-talk between the cell surface and intracellular calcium release channels. JPH3 is brain-specific and appears to have an active role in certain neurons involved in motor coordination and memory. The sequence is that of Junctophilin-3 (Jph3) from Mus musculus (Mouse).